The chain runs to 418 residues: Mitochondrial distribution and morphology protein 10 (418 aa).

This sequence belongs to the MDM10 family. Component of the ER-mitochondria encounter structure (ERMES) or MDM complex, composed of MMM1, MDM10, MDM12 and MDM34. Associates with the mitochondrial outer membrane sorting assembly machinery SAM(core) complex.

The protein localises to the mitochondrion outer membrane. Component of the ERMES/MDM complex, which serves as a molecular tether to connect the endoplasmic reticulum and mitochondria. Components of this complex are involved in the control of mitochondrial shape and protein biogenesis and may function in phospholipid exchange. MDM10 is involved in the late assembly steps of the general translocase of the mitochondrial outer membrane (TOM complex). Functions in the TOM40-specific route of the assembly of outer membrane beta-barrel proteins, including the association of TOM40 with the receptor TOM22 and small TOM proteins. Can associate with the SAM(core) complex as well as the MDM12-MMM1 complex, both involved in late steps of the major beta-barrel assembly pathway, that is responsible for biogenesis of all outer membrane beta-barrel proteins. May act as a switch that shuttles between both complexes and channels precursor proteins into the TOM40-specific pathway. Plays a role in mitochondrial morphology and in the inheritance of mitochondria. This is Mitochondrial distribution and morphology protein 10 from Meyerozyma guilliermondii (strain ATCC 6260 / CBS 566 / DSM 6381 / JCM 1539 / NBRC 10279 / NRRL Y-324) (Yeast).